The sequence spans 62 residues: ATP synthase subunit epsilon, mitochondrial (62 aa).

Thr52 is subject to Phosphothreonine.

This sequence belongs to the eukaryotic ATPase epsilon family. As to quaternary structure, F-type ATPases have 2 components, CF(1) - the catalytic core - and CF(0) - the membrane proton channel. CF(1) has five subunits: alpha(3), beta(3), gamma(1), delta(1), epsilon(1). CF(0) has three main subunits: a, b and c.

Its subcellular location is the mitochondrion. It is found in the mitochondrion inner membrane. Mitochondrial membrane ATP synthase (F(1)F(0) ATP synthase or Complex V) produces ATP from ADP in the presence of a proton gradient across the membrane which is generated by electron transport complexes of the respiratory chain. F-type ATPases consist of two structural domains, F(1) - containing the extramembraneous catalytic core, and F(0) - containing the membrane proton channel, linked together by a central stalk and a peripheral stalk. During catalysis, ATP synthesis in the catalytic domain of F(1) is coupled via a rotary mechanism of the central stalk subunits to proton translocation. Part of the complex F(1) domain and of the central stalk which is part of the complex rotary element. Rotation of the central stalk against the surrounding alpha(3)beta(3) subunits leads to hydrolysis of ATP in three separate catalytic sites on the beta subunits. This is ATP synthase subunit epsilon, mitochondrial (ATP15) from Saccharomyces cerevisiae (strain ATCC 204508 / S288c) (Baker's yeast).